The chain runs to 885 residues: Alanine--tRNA ligase (885 aa).

4 residues coordinate Zn(2+): His572, His576, Cys675, and His679.

This sequence belongs to the class-II aminoacyl-tRNA synthetase family. Zn(2+) serves as cofactor.

The protein localises to the cytoplasm. The catalysed reaction is tRNA(Ala) + L-alanine + ATP = L-alanyl-tRNA(Ala) + AMP + diphosphate. In terms of biological role, catalyzes the attachment of alanine to tRNA(Ala) in a two-step reaction: alanine is first activated by ATP to form Ala-AMP and then transferred to the acceptor end of tRNA(Ala). Also edits incorrectly charged Ser-tRNA(Ala) and Gly-tRNA(Ala) via its editing domain. The chain is Alanine--tRNA ligase from Leifsonia xyli subsp. xyli (strain CTCB07).